A 61-amino-acid polypeptide reads, in one-letter code: Small ribosomal subunit protein uS14 (61 aa).

Zn(2+) contacts are provided by Cys-24, Cys-27, Cys-40, and Cys-43.

It belongs to the universal ribosomal protein uS14 family. Zinc-binding uS14 subfamily. As to quaternary structure, part of the 30S ribosomal subunit. Contacts proteins S3 and S10. Zn(2+) serves as cofactor.

Binds 16S rRNA, required for the assembly of 30S particles and may also be responsible for determining the conformation of the 16S rRNA at the A site. The chain is Small ribosomal subunit protein uS14 from Geobacillus thermodenitrificans (strain NG80-2).